A 485-amino-acid chain; its full sequence is Acetyl-coenzyme A carboxylase carboxyl transferase subunit beta, chloroplastic (485 aa).

One can recognise a CoA carboxyltransferase N-terminal domain in the interval Leu-218–Lys-485. Zn(2+)-binding residues include Cys-222, Cys-225, Cys-241, and Cys-244. The C4-type zinc-finger motif lies at Cys-222 to Cys-244.

It belongs to the AccD/PCCB family. Acetyl-CoA carboxylase is a heterohexamer composed of biotin carboxyl carrier protein, biotin carboxylase and 2 subunits each of ACCase subunit alpha and ACCase plastid-coded subunit beta (accD). Zn(2+) serves as cofactor.

Its subcellular location is the plastid. The protein localises to the chloroplast stroma. The enzyme catalyses N(6)-carboxybiotinyl-L-lysyl-[protein] + acetyl-CoA = N(6)-biotinyl-L-lysyl-[protein] + malonyl-CoA. It participates in lipid metabolism; malonyl-CoA biosynthesis; malonyl-CoA from acetyl-CoA: step 1/1. In terms of biological role, component of the acetyl coenzyme A carboxylase (ACC) complex. Biotin carboxylase (BC) catalyzes the carboxylation of biotin on its carrier protein (BCCP) and then the CO(2) group is transferred by the transcarboxylase to acetyl-CoA to form malonyl-CoA. This is Acetyl-coenzyme A carboxylase carboxyl transferase subunit beta, chloroplastic from Aethionema cordifolium (Lebanon stonecress).